A 120-amino-acid chain; its full sequence is Large ribosomal subunit protein bL17 (120 aa).

It belongs to the bacterial ribosomal protein bL17 family. In terms of assembly, part of the 50S ribosomal subunit. Contacts protein L32.

The protein is Large ribosomal subunit protein bL17 of Halalkalibacterium halodurans (strain ATCC BAA-125 / DSM 18197 / FERM 7344 / JCM 9153 / C-125) (Bacillus halodurans).